We begin with the raw amino-acid sequence, 210 residues long: Dynactin-associated protein (210 aa).

Over 1 to 113 the chain is Cytoplasmic; the sequence is MVADIKGNEQ…YCRNDWSMWK (113 aa). A helical; Signal-anchor for type II membrane protein membrane pass occupies residues 114–134; that stretch reads VFLACLLACVIMTAIGVLIIC. Residues 135–210 lie on the Extracellular side of the membrane; sequence LVNNKGSANS…PITVAPTDHL (76 aa). The tract at residues 168–210 is disordered; that stretch reads ACPPTMTTTSTVPASTATESTTSTATAATTSTEPITVAPTDHL. Residues 171-203 are compositionally biased toward low complexity; that stretch reads PTMTTTSTVPASTATESTTSTATAATTSTEPIT.

In terms of assembly, interacts with DCTN1 and DCTN2. As to expression, expressed in fibroblast and numerous cancer cell lines (at protein level).

It localises to the golgi apparatus membrane. The protein localises to the cell membrane. Its function is as follows. Plays a role in the regulation of cell proliferation. Promotes activation of the AKT1 signaling pathway. Promotes phosphorylation of AKT1 at 'Ser-473'. The protein is Dynactin-associated protein (DYNAP) of Homo sapiens (Human).